A 435-amino-acid polypeptide reads, in one-letter code: Xylose isomerase (435 aa).

Residues H100 and D103 contribute to the active site. Residues E231, E267, H270, D295, D306, D308, and D338 each contribute to the Mg(2+) site.

Belongs to the xylose isomerase family. As to quaternary structure, homotetramer. The cofactor is Mg(2+).

Its subcellular location is the cytoplasm. It catalyses the reaction alpha-D-xylose = alpha-D-xylulofuranose. The chain is Xylose isomerase from Brucella anthropi (strain ATCC 49188 / DSM 6882 / CCUG 24695 / JCM 21032 / LMG 3331 / NBRC 15819 / NCTC 12168 / Alc 37) (Ochrobactrum anthropi).